We begin with the raw amino-acid sequence, 762 residues long: 5-methyltetrahydropteroyltriglutamate--homocysteine methyltransferase (762 aa).

Residues 16-19 and K117 each bind 5-methyltetrahydropteroyltri-L-glutamate; that span reads RELK. L-homocysteine-binding positions include 438 to 440 and E491; that span reads IGS. L-methionine is bound by residues 438–440 and E491; that span reads IGS. Residues 522-523 and W568 contribute to the 5-methyltetrahydropteroyltri-L-glutamate site; that span reads RC. Residue D606 coordinates L-homocysteine. D606 lines the L-methionine pocket. Residue E612 participates in 5-methyltetrahydropteroyltri-L-glutamate binding. Zn(2+) is bound by residues H648, C650, and E672. H701 serves as the catalytic Proton donor. C733 lines the Zn(2+) pocket.

This sequence belongs to the vitamin-B12 independent methionine synthase family. It depends on Zn(2+) as a cofactor.

It catalyses the reaction 5-methyltetrahydropteroyltri-L-glutamate + L-homocysteine = tetrahydropteroyltri-L-glutamate + L-methionine. It functions in the pathway amino-acid biosynthesis; L-methionine biosynthesis via de novo pathway; L-methionine from L-homocysteine (MetE route): step 1/1. Catalyzes the transfer of a methyl group from 5-methyltetrahydrofolate to homocysteine resulting in methionine formation. The protein is 5-methyltetrahydropteroyltriglutamate--homocysteine methyltransferase of Pseudomonas fluorescens (strain ATCC BAA-477 / NRRL B-23932 / Pf-5).